The chain runs to 1060 residues: MSKESTRPFPTLPAQIDLPAMEHEVLRRWEEHKIFERSLEQTQGGPTWVFYEGPPTANGTPGVHHVEARVFKDVFPRFKTMKGFYVERKAGWDCHGLPVEVAVEKELGISGKKDIEAFGIAEFNARCRESVLRNVDAFTEMTRRMGYWVNMDEAYRTMDREYVESVWWAIKQIWDKGLLVQDYRISPYCPRCGTTLSDHELAQGYETVTDPSVYVRFPLTSGPLAGQAALLVWTTTPWTLVSNTAVAVHPEVDYVVATDGSEQLVVAEPLVGAALGDGWTLTGQRFKGAELERWTYQRPFELVEFDSPAHFVVLGDYVTVEDGTGLVHQAPAFGADDMQVCRAYGLPVVNPVRNDGTFEEHLDLVGDEFFKTADAALVADLKDRGLLFKHLDYEHSYPHCWRCHTPLMYYAVPSWYIKTTAIKDQLLAENAKTNWVPANVKDGRYGEWLRNNVDWALSRSRYWGTPLPIWEFPDGRRICVGSLKELSELSGQDLSDLDPHRPYVDDIVIPDPDADPSLPLEQRVARRVPEVIDVWFDSGAMPFAQWGAPHRNQEKFEANFPAQYICEAIDQTRGWFYSLMAVSTLVFGRSSYENVVCLGHILAEDGRKMSKHLGNILEPIPVMDRHGADALRWFMAASGSPWMPRRVGHTVLEEIVRKVLLTYYNSASFFTLYAGAGDGWSHEQLADAPAPQDRPLLDRWILSELHSLIKTVDDALERFDTALAGRALTTFIDDLSNWYVRRSRRRFWAGAGTPEGAAAFATLFECLETLTLLMAPIVPFITDHVWQALRRPDAPESVHLASWPKADESLIDPALSEQMALVRRLVELGRAARVDSGQRVRQPLARALVGAPGFAELPEQLRAQIAEELNVVQLDPLSVVGGDLVDYSVKPNFRALGKRFGKTTPRVAQAIREADAKTLVERLRADNAATVDVDGEQVVLSADEVVVTEQPREGWTVASEAGETVALDLELTPELRRAGVAREVIRLVQDARKSSGLNISDRIHLWWSATDEMTAQAMAEHAEAISSEVLAVSFTEGTGDADAYEVVSEEFGITLRLRKA.

Positions 55–65 (PTANGTPGVHH) match the 'HIGH' region motif. The short motif at 608–612 (KMSKH) is the 'KMSKS' region element. Lys611 is an ATP binding site.

The protein belongs to the class-I aminoacyl-tRNA synthetase family. IleS type 2 subfamily. In terms of assembly, monomer. It depends on Zn(2+) as a cofactor.

The protein resides in the cytoplasm. The enzyme catalyses tRNA(Ile) + L-isoleucine + ATP = L-isoleucyl-tRNA(Ile) + AMP + diphosphate. In terms of biological role, catalyzes the attachment of isoleucine to tRNA(Ile). As IleRS can inadvertently accommodate and process structurally similar amino acids such as valine, to avoid such errors it has two additional distinct tRNA(Ile)-dependent editing activities. One activity is designated as 'pretransfer' editing and involves the hydrolysis of activated Val-AMP. The other activity is designated 'posttransfer' editing and involves deacylation of mischarged Val-tRNA(Ile). This chain is Isoleucine--tRNA ligase, found in Thermobifida fusca (strain YX).